A 442-amino-acid chain; its full sequence is tRNA-2-methylthio-N(6)-dimethylallyladenosine synthase (442 aa).

One can recognise an MTTase N-terminal domain in the interval 2-120; that stretch reads KKVFIRTFGC…LPKMIVDKET (119 aa). [4Fe-4S] cluster contacts are provided by Cys11, Cys49, Cys83, Cys157, Cys161, and Cys164. The Radical SAM core domain occupies 143 to 375; sequence RVEGGAAFVS…NEVIEAETAR (233 aa). Residues 378–441 form the TRAM domain; it reads QTMIGTVQRC…TFSLRGKVVE (64 aa).

It belongs to the methylthiotransferase family. MiaB subfamily. Monomer. [4Fe-4S] cluster is required as a cofactor.

It is found in the cytoplasm. It catalyses the reaction N(6)-dimethylallyladenosine(37) in tRNA + (sulfur carrier)-SH + AH2 + 2 S-adenosyl-L-methionine = 2-methylsulfanyl-N(6)-dimethylallyladenosine(37) in tRNA + (sulfur carrier)-H + 5'-deoxyadenosine + L-methionine + A + S-adenosyl-L-homocysteine + 2 H(+). Catalyzes the methylthiolation of N6-(dimethylallyl)adenosine (i(6)A), leading to the formation of 2-methylthio-N6-(dimethylallyl)adenosine (ms(2)i(6)A) at position 37 in tRNAs that read codons beginning with uridine. The protein is tRNA-2-methylthio-N(6)-dimethylallyladenosine synthase of Neisseria meningitidis serogroup C (strain 053442).